The chain runs to 313 residues: Beta-lactamase (313 aa).

Positions 1–15 are cleaved as a signal peptide; sequence MQRIGVTDYTILGTV. Ser190 acts as the Acyl-ester intermediate in catalysis.

It belongs to the class-C beta-lactamase family.

The catalysed reaction is a beta-lactam + H2O = a substituted beta-amino acid. Functionally, upon expression in E.coli enables the latter to utilize penicillin as a carbon source. This is Beta-lactamase (penA) from Burkholderia multivorans (strain ATCC 17616 / 249).